We begin with the raw amino-acid sequence, 312 residues long: MNNINSNKHISVRLEDAVDSLNIQKDKIYVDCTFGRGGHSFEILKRLSSKGKLFVFDLDLDAKKYFDNNFSKFKNCFFIQDNFKNLKENLAKFDISKVDGFLFDFGVSSPMLDNANRGFSFKLDARLDMRMNQNQELSAYEVINNYSKEKLIQIFWKYGEIRNPVPVVDEIIKYRSNKPIETTLELVDIIRKRTPIKIQREKKHFARTYFQAIRIEVNDELNSIRKALSDALNMLSKNGRIVTISFHSLEEKEIKNTYKDVLESKIPKEVPINNSFDFKIIKIKPKRASSSELEENNRTRSSFLKVIERVNE.

Residues 37–39 (GGH), Asp57, Phe83, and Asp104 contribute to the S-adenosyl-L-methionine site.

The protein belongs to the methyltransferase superfamily. RsmH family.

It localises to the cytoplasm. The enzyme catalyses cytidine(1402) in 16S rRNA + S-adenosyl-L-methionine = N(4)-methylcytidine(1402) in 16S rRNA + S-adenosyl-L-homocysteine + H(+). Specifically methylates the N4 position of cytidine in position 1402 (C1402) of 16S rRNA. The sequence is that of Ribosomal RNA small subunit methyltransferase H from Malacoplasma penetrans (strain HF-2) (Mycoplasma penetrans).